We begin with the raw amino-acid sequence, 566 residues long: Putative ABC transporter ATP-binding protein lp_0149 (566 aa).

2 ABC transporter domains span residues 6–247 and 302–536; these read ISFK…GLRE and LAIE…ASLA. ATP contacts are provided by residues 40–47 and 335–342; these read GPSGSGKS and GQNGTGKS.

This sequence belongs to the ABC transporter superfamily.

It localises to the cell membrane. Functionally, probably part of an ABC transporter complex. Responsible for energy coupling to the transport system. The chain is Putative ABC transporter ATP-binding protein lp_0149 from Lactiplantibacillus plantarum (strain ATCC BAA-793 / NCIMB 8826 / WCFS1) (Lactobacillus plantarum).